The chain runs to 595 residues: Tripeptidyl-peptidase SED3 (595 aa).

Residues 1–22 form the signal peptide; it reads MLLPWQQTIIILFLGVNSLVAA. The propeptide at 23–201 is removed in mature form; sequence LRNTYRTVEE…KLETIQLSSN (179 aa). Asn-207, Asn-264, and Asn-278 each carry an N-linked (GlcNAc...) asparagine glycan. The region spanning 209–595 is the Peptidase S53 domain; the sequence is TITPQCLRDI…EILAKIVRDL (387 aa). Catalysis depends on charge relay system residues Glu-285 and Asp-289. Residues Asn-298 and Asn-365 are each glycosylated (N-linked (GlcNAc...) asparagine). Residue Ser-499 is the Charge relay system of the active site. Residues Asp-541 and Ile-542 each contribute to the Ca(2+) site. N-linked (GlcNAc...) asparagine glycans are attached at residues Asn-554, Asn-557, and Asn-569. 2 residues coordinate Ca(2+): Gly-573 and Asp-575.

Requires Ca(2+) as cofactor.

The protein resides in the secreted. The protein localises to the extracellular space. The catalysed reaction is Release of an N-terminal tripeptide from a polypeptide.. Its function is as follows. Secreted tripeptidyl-peptidase which degrades proteins at acidic pHs and is involved in virulence. This Arthroderma otae (strain ATCC MYA-4605 / CBS 113480) (Microsporum canis) protein is Tripeptidyl-peptidase SED3 (SED3).